The following is a 449-amino-acid chain: Cryptochrome DASH (449 aa).

Positions 15–147 (RLGLFVFRND…PFHETPNNTL (133 aa)) constitute a Photolyase/cryptochrome alpha/beta domain.

The protein belongs to the DNA photolyase class-1 family. The cofactor is FAD. It depends on (6R)-5,10-methylene-5,6,7,8-tetrahydrofolate as a cofactor.

May have a photoreceptor function. Binds DNA; probably functions as a transcriptional repressor. The protein is Cryptochrome DASH (cry) of Idiomarina loihiensis (strain ATCC BAA-735 / DSM 15497 / L2-TR).